A 182-amino-acid chain; its full sequence is Large ribosomal subunit protein uL6 (182 aa).

Belongs to the universal ribosomal protein uL6 family. As to quaternary structure, part of the 50S ribosomal subunit.

Functionally, this protein binds to the 23S rRNA, and is important in its secondary structure. It is located near the subunit interface in the base of the L7/L12 stalk, and near the tRNA binding site of the peptidyltransferase center. This Methanococcus maripaludis (strain C5 / ATCC BAA-1333) protein is Large ribosomal subunit protein uL6.